The chain runs to 616 residues: Glutamine--fructose-6-phosphate aminotransferase [isomerizing] (616 aa).

C2 (nucleophile; for GATase activity) is an active-site residue. Positions 2-222 (CGIIGYSGPR…QERIVALSGD (221 aa)) constitute a Glutamine amidotransferase type-2 domain. Positions 70–89 (TGIGHTRWATHGEPSDRNAH) are disordered. 2 consecutive SIS domains span residues 289–428 (IRDD…LRGF) and 461–606 (LAHW…VDRP). The For Fru-6P isomerization activity role is filled by K611.

Homodimer.

It is found in the cytoplasm. It catalyses the reaction D-fructose 6-phosphate + L-glutamine = D-glucosamine 6-phosphate + L-glutamate. Catalyzes the first step in hexosamine metabolism, converting fructose-6P into glucosamine-6P using glutamine as a nitrogen source. The chain is Glutamine--fructose-6-phosphate aminotransferase [isomerizing] from Tropheryma whipplei (strain TW08/27) (Whipple's bacillus).